A 218-amino-acid polypeptide reads, in one-letter code: MSLHHIANRTKKLPPLRVGIGGPVGSGKTTLLEMLCKAMKNKYDLVAITNDIYTKEDQRLLTVSGALAAERIMGVETGGCPHTAIREDASINLEAIDRMLVDFPDADVVFVESGGDNLAATFSPELSDLTIYVIDVAAGEKIPRKGGPGITKSDLFVINKTDLAPYVGADLGVMEADTIRMRTTPKGLKPFVMTNLKTNTGLAEVIAFIETKGMLQAG.

Glycine 22–threonine 29 serves as a coordination point for GTP.

Belongs to the SIMIBI class G3E GTPase family. UreG subfamily. Homodimer. UreD, UreF and UreG form a complex that acts as a GTP-hydrolysis-dependent molecular chaperone, activating the urease apoprotein by helping to assemble the nickel containing metallocenter of UreC. The UreE protein probably delivers the nickel.

The protein localises to the cytoplasm. Functionally, facilitates the functional incorporation of the urease nickel metallocenter. This process requires GTP hydrolysis, probably effectuated by UreG. The protein is Urease accessory protein UreG of Polaromonas sp. (strain JS666 / ATCC BAA-500).